Reading from the N-terminus, the 476-residue chain is Cysteine--tRNA ligase (476 aa).

Cys28 is a binding site for Zn(2+). A 'HIGH' region motif is present at residues Val30–His40. Residues Cys215, His241, and Glu245 each coordinate Zn(2+). A 'KMSKS' region motif is present at residues Lys273 to Ser277. Position 276 (Lys276) interacts with ATP.

The protein belongs to the class-I aminoacyl-tRNA synthetase family. In terms of assembly, monomer. It depends on Zn(2+) as a cofactor.

Its subcellular location is the cytoplasm. It catalyses the reaction tRNA(Cys) + L-cysteine + ATP = L-cysteinyl-tRNA(Cys) + AMP + diphosphate. In Buchnera aphidicola subsp. Cinara cedri (strain Cc), this protein is Cysteine--tRNA ligase.